The sequence spans 227 residues: NAD(P)H-quinone oxidoreductase subunit K, chloroplastic (227 aa).

Positions 43, 44, 108, and 139 each coordinate [4Fe-4S] cluster.

The protein belongs to the complex I 20 kDa subunit family. As to quaternary structure, NDH is composed of at least 16 different subunits, 5 of which are encoded in the nucleus. Requires [4Fe-4S] cluster as cofactor.

The protein localises to the plastid. It localises to the chloroplast thylakoid membrane. It carries out the reaction a plastoquinone + NADH + (n+1) H(+)(in) = a plastoquinol + NAD(+) + n H(+)(out). It catalyses the reaction a plastoquinone + NADPH + (n+1) H(+)(in) = a plastoquinol + NADP(+) + n H(+)(out). Its function is as follows. NDH shuttles electrons from NAD(P)H:plastoquinone, via FMN and iron-sulfur (Fe-S) centers, to quinones in the photosynthetic chain and possibly in a chloroplast respiratory chain. The immediate electron acceptor for the enzyme in this species is believed to be plastoquinone. Couples the redox reaction to proton translocation, and thus conserves the redox energy in a proton gradient. In Pelargonium hortorum (Common geranium), this protein is NAD(P)H-quinone oxidoreductase subunit K, chloroplastic.